The sequence spans 150 residues: Translation machinery-associated protein 17 (150 aa).

A phosphoserine mark is found at S24 and S68. The segment at 110–139 (RKTGHGKSKHEVEAKDNTNKGPDVDMDNSN) is disordered. Residues 118–127 (KHEVEAKDNT) show a composition bias toward basic and acidic residues.

Interacts with RPT6. Interacts with the 40S and 60S ribosomal subunits.

Its subcellular location is the cytoplasm. The protein localises to the nucleus. Its function is as follows. ATPase-dedicated chaperone that assists the formation of the RPT6-RPT3 ATPase pair, an early step in proteasome assembly. Plays a key role in maintaining homeostatic proteasome levels and adjusting proteasome assembly when demands increase, such as during proteasome stresses. Function overlaps with RPN14. This is Translation machinery-associated protein 17 (TMA17) from Saccharomyces cerevisiae (strain ATCC 204508 / S288c) (Baker's yeast).